The chain runs to 360 residues: Photosystem II protein D1 (360 aa).

3 helical membrane-spanning segments follow: residues 29-46 (YIGWFGVLMIPCLLTATC), 118-133 (HFLIGVASYMGREWEL), and 142-156 (WICVAFSAPVAAATA). Histidine 118 lines the chlorophyll a pocket. Tyrosine 126 contributes to the pheophytin a binding site. Residues aspartate 170 and glutamate 189 each contribute to the [CaMn4O5] cluster site. A helical membrane pass occupies residues 197 to 218 (FHMAGVAGVFGGALFSAMHGSL). Residue histidine 198 coordinates chlorophyll a. A quinone contacts are provided by residues histidine 215 and 264-265 (SF). Position 215 (histidine 215) interacts with Fe cation. Fe cation is bound at residue histidine 272. The chain crosses the membrane as a helical span at residues 274–288 (FLGAWPVVGIWLTAI). The [CaMn4O5] cluster site is built by histidine 332, glutamate 333, aspartate 342, and alanine 344. The propeptide occupies 345-360 (SNSVVPVALTAPSVEA).

Belongs to the reaction center PufL/M/PsbA/D family. PSII is composed of 1 copy each of membrane proteins PsbA, PsbB, PsbC, PsbD, PsbE, PsbF, PsbH, PsbI, PsbJ, PsbK, PsbL, PsbM, PsbT, PsbX, PsbY, PsbZ, Psb30/Ycf12, at least 3 peripheral proteins of the oxygen-evolving complex and a large number of cofactors. It forms dimeric complexes. It depends on The D1/D2 heterodimer binds P680, chlorophylls that are the primary electron donor of PSII, and subsequent electron acceptors. It shares a non-heme iron and each subunit binds pheophytin, quinone, additional chlorophylls, carotenoids and lipids. D1 provides most of the ligands for the Mn4-Ca-O5 cluster of the oxygen-evolving complex (OEC). There is also a Cl(-1) ion associated with D1 and D2, which is required for oxygen evolution. The PSII complex binds additional chlorophylls, carotenoids and specific lipids. as a cofactor. Tyr-161 forms a radical intermediate that is referred to as redox-active TyrZ, YZ or Y-Z. Post-translationally, C-terminally processed by CTPA; processing is essential to allow assembly of the oxygen-evolving complex and thus photosynthetic growth.

The protein resides in the plastid. The protein localises to the chloroplast thylakoid membrane. The enzyme catalyses 2 a plastoquinone + 4 hnu + 2 H2O = 2 a plastoquinol + O2. In terms of biological role, photosystem II (PSII) is a light-driven water:plastoquinone oxidoreductase that uses light energy to abstract electrons from H(2)O, generating O(2) and a proton gradient subsequently used for ATP formation. It consists of a core antenna complex that captures photons, and an electron transfer chain that converts photonic excitation into a charge separation. The D1/D2 (PsbA/PsbD) reaction center heterodimer binds P680, the primary electron donor of PSII as well as several subsequent electron acceptors. The polypeptide is Photosystem II protein D1 (Cyanidioschyzon merolae (strain NIES-3377 / 10D) (Unicellular red alga)).